The primary structure comprises 415 residues: Lipoyl synthase, mitochondrial (415 aa).

The N-terminal 32 residues, 1–32 (MAVSTSHFRSLCASSRSLSRTGIVAPISCRGY), are a transit peptide targeting the mitochondrion. The segment at 30–50 (RGYATTEPSPSATSTTTTTTA) is disordered. The span at 33 to 49 (ATTEPSPSATSTTTTTT) shows a compositional bias: low complexity. [4Fe-4S] cluster-binding residues include Cys132, Cys137, Cys143, Cys163, Cys167, Cys170, and Ser378. Residues 146-367 (GSDKSAATAT…RQRALDMGFL (222 aa)) enclose the Radical SAM core domain.

It belongs to the radical SAM superfamily. Lipoyl synthase family. [4Fe-4S] cluster serves as cofactor.

It localises to the mitochondrion. The enzyme catalyses [[Fe-S] cluster scaffold protein carrying a second [4Fe-4S](2+) cluster] + N(6)-octanoyl-L-lysyl-[protein] + 2 oxidized [2Fe-2S]-[ferredoxin] + 2 S-adenosyl-L-methionine + 4 H(+) = [[Fe-S] cluster scaffold protein] + N(6)-[(R)-dihydrolipoyl]-L-lysyl-[protein] + 4 Fe(3+) + 2 hydrogen sulfide + 2 5'-deoxyadenosine + 2 L-methionine + 2 reduced [2Fe-2S]-[ferredoxin]. It functions in the pathway protein modification; protein lipoylation via endogenous pathway; protein N(6)-(lipoyl)lysine from octanoyl-[acyl-carrier-protein]: step 2/2. Functionally, catalyzes the radical-mediated insertion of two sulfur atoms into the C-6 and C-8 positions of the octanoyl moiety bound to the lipoyl domains of lipoate-dependent enzymes, thereby converting the octanoylated domains into lipoylated derivatives. This chain is Lipoyl synthase, mitochondrial, found in Neosartorya fischeri (strain ATCC 1020 / DSM 3700 / CBS 544.65 / FGSC A1164 / JCM 1740 / NRRL 181 / WB 181) (Aspergillus fischerianus).